A 156-amino-acid chain; its full sequence is Small ribosomal subunit protein uS7 (156 aa).

The protein belongs to the universal ribosomal protein uS7 family. Part of the 30S ribosomal subunit. Contacts proteins S9 and S11.

One of the primary rRNA binding proteins, it binds directly to 16S rRNA where it nucleates assembly of the head domain of the 30S subunit. Is located at the subunit interface close to the decoding center, probably blocks exit of the E-site tRNA. This chain is Small ribosomal subunit protein uS7, found in Mycoplasmopsis pulmonis (strain UAB CTIP) (Mycoplasma pulmonis).